Here is a 288-residue protein sequence, read N- to C-terminus: Peroxisomal membrane protein pex13 (288 aa).

The segment at 1–32 (METNQNEKGPSLPSYPAGGIMSVSNSNADTNQ) is disordered. The span at 22 to 32 (SVSNSNADTNQ) shows a compositional bias: polar residues. A helical membrane pass occupies residues 178–198 (IYSIVSSLAIILGLVGLPYAI). Positions 222–288 (DSLEFCKADY…PSNYCSIISR (67 aa)) constitute an SH3 domain.

It belongs to the peroxin-13 family. Interacts (via SH3 domain) with PEX14 (via SH3-binding motif); forming the PEX13-PEX14 docking complex.

The protein localises to the peroxisome membrane. In terms of biological role, component of the PEX13-PEX14 docking complex, a translocon channel that specifically mediates the import of peroxisomal cargo proteins bound to PEX5 receptor. The PEX13-PEX14 docking complex forms a large import pore which can be opened to a diameter of about 9 nm. Mechanistically, PEX5 receptor along with cargo proteins associates with the PEX14 subunit of the PEX13-PEX14 docking complex in the cytosol, leading to the insertion of the receptor into the organelle membrane with the concomitant translocation of the cargo into the peroxisome matrix. The chain is Peroxisomal membrane protein pex13 (pex13) from Schizosaccharomyces pombe (strain 972 / ATCC 24843) (Fission yeast).